A 314-amino-acid polypeptide reads, in one-letter code: MTSTRYEGDTWDLASSVGVTATMVAAARAMATRADNPLINDLFAEPLVKAVGVDLLSRLAGGELDPAELNDVHDGAAGSAGAMSRMADNMAVRTKFFDEFFLNATKAGIAQVVILASGLDARAYRLAWPAGTVVYEVDQPQVIDFKTTALAQLGAAPTAERRVVAVDLRDDWPAALRAAGFDPARPTAWSAEGLLGYLPPEAQDRLLDTITELSAPGSRLATESAPNPAPGEEEKLKERMQAISQRWRAHGFDLDMAGLVYFGERNEAAPYLAGHGWRLNSVTIRDLFAANGLDPLDDDDTRMGEMLYTWGIYE.

S-adenosyl-L-methionine-binding positions include Asp-138 and 167–168 (DL).

Belongs to the UPF0677 family.

Functionally, exhibits S-adenosyl-L-methionine-dependent methyltransferase activity. This chain is Putative S-adenosyl-L-methionine-dependent methyltransferase MAP_4191c, found in Mycolicibacterium paratuberculosis (strain ATCC BAA-968 / K-10) (Mycobacterium paratuberculosis).